The primary structure comprises 955 residues: Thyroid hormone receptor-associated protein 3 (955 aa).

The interval 1 to 94 (MSKTNKSKSG…YFRGRNRGFY (94 aa)) is disordered. The residue at position 2 (serine 2) is an N-acetylserine. The required for mRNA splicing activation stretch occupies residues 2–190 (SKTNKSKSGS…KSSSKDSRPS (189 aa)). Over residues 14–51 (SRSRSASRSRSRSFSKSRSRSRSLSRSRKRRLSSRSRS) the composition is skewed to basic residues. Position 17 is a dimethylated arginine (arginine 17). Basic and acidic residues predominate over residues 58–75 (HNRERNHPRVYQNRDFRG). The residue at position 66 (arginine 66) is an Asymmetric dimethylarginine. Residues 82–94 (RPYYFRGRNRGFY) are compositionally biased toward low complexity. Asymmetric dimethylarginine is present on residues arginine 101 and arginine 108. Residues 117 to 559 (AYSPRRGRSR…AKGDFPTGKS (443 aa)) are disordered. Positions 121–143 (RRGRSRSRSPKRRSPSPRSRSHS) are enriched in basic residues. Basic and acidic residues predominate over residues 144–155 (RNSDKSSSDRSR). Residues 157-166 (SSSSRSSSNH) are compositionally biased toward low complexity. Basic and acidic residues predominate over residues 167-188 (SRVESSKRKSAKEKKSSSKDSR). A Glycyl lysine isopeptide (Lys-Gly) (interchain with G-Cter in SUMO1); alternate cross-link involves residue lysine 202. Lysine 202 participates in a covalent cross-link: Glycyl lysine isopeptide (Lys-Gly) (interchain with G-Cter in SUMO2); alternate. Residues 204–220 (QTFSGGTSQDTKASESS) are compositionally biased toward polar residues. Lysine 215 is covalently cross-linked (Glycyl lysine isopeptide (Lys-Gly) (interchain with G-Cter in SUMO2)). The residue at position 220 (serine 220) is a Phosphoserine. A Glycyl lysine isopeptide (Lys-Gly) (interchain with G-Cter in SUMO2); alternate cross-link involves residue lysine 221. Residue lysine 221 is modified to N6-acetyllysine; alternate. Serine 232, serine 237, serine 240, serine 243, and serine 248 each carry phosphoserine. Residue lysine 252 forms a Glycyl lysine isopeptide (Lys-Gly) (interchain with G-Cter in SUMO2); alternate linkage. N6-methyllysine; alternate is present on lysine 252. A phosphoserine mark is found at serine 253 and serine 257. Over residues 266–276 (RPSPVPKPSPP) the composition is skewed to pro residues. The segment covering 282–300 (QMGSTLPSGAGYQSGTHQG) has biased composition (polar residues). The span at 305-331 (GSGSLSPSKKSPVGKSPPSTGSTYGSS) shows a compositional bias: low complexity. Phosphoserine is present on residues serine 315, serine 320, and serine 323. At threonine 324 the chain carries Phosphothreonine. Residue serine 326 is modified to Phosphoserine. Tyrosine 328 carries the post-translational modification Phosphotyrosine. Lysine 333 is covalently cross-linked (Glycyl lysine isopeptide (Lys-Gly) (interchain with G-Cter in SUMO2)). Serine 339 is modified (phosphoserine). Lysine 346 participates in a covalent cross-link: Glycyl lysine isopeptide (Lys-Gly) (interchain with G-Cter in SUMO2); alternate. Lysine 346 is modified (N6-acetyllysine; alternate). The span at 347 to 377 (RYLEEQKTENGKDKEQKQTNTDKEKIKEKGS) shows a compositional bias: basic and acidic residues. Residues lysine 353 and lysine 375 each participate in a glycyl lysine isopeptide (Lys-Gly) (interchain with G-Cter in SUMO2) cross-link. The interval 359–955 (DKEQKQTNTD…EKDNIQPTTE (597 aa)) is required for mRNA decay activity. A phosphoserine mark is found at serine 377 and serine 379. Lysine 387 is covalently cross-linked (Glycyl lysine isopeptide (Lys-Gly) (interchain with G-Cter in SUMO1); alternate). Residue lysine 387 forms a Glycyl lysine isopeptide (Lys-Gly) (interchain with G-Cter in SUMO2); alternate linkage. Glycyl lysine isopeptide (Lys-Gly) (interchain with G-Cter in SUMO2) cross-links involve residues lysine 389 and lysine 396. Threonine 397 carries the post-translational modification Phosphothreonine. A Glycyl lysine isopeptide (Lys-Gly) (interchain with G-Cter in SUMO2) cross-link involves residue lysine 401. Phosphoserine is present on residues serine 406 and serine 408. Over residues 414–452 (LRDDFEKKMADFHKEEMDDQDKDKAKGRKESEFDDEPKF) the composition is skewed to basic and acidic residues. Residues lysine 421 and lysine 427 each participate in a glycyl lysine isopeptide (Lys-Gly) (interchain with G-Cter in SUMO2) cross-link. Residue serine 444 is modified to Phosphoserine. Lysine 451 participates in a covalent cross-link: Glycyl lysine isopeptide (Lys-Gly) (interchain with G-Cter in SUMO1); alternate. Residues lysine 451 and lysine 455 each participate in a glycyl lysine isopeptide (Lys-Gly) (interchain with G-Cter in SUMO2); alternate cross-link. N6-acetyllysine; alternate is present on lysine 455. Residues lysine 461 and lysine 467 each participate in a glycyl lysine isopeptide (Lys-Gly) (interchain with G-Cter in SUMO2) cross-link. Serine 468 bears the Phosphoserine mark. Glycyl lysine isopeptide (Lys-Gly) (interchain with G-Cter in SUMO2); alternate cross-links involve residues lysine 470 and lysine 481. Residues lysine 470 and lysine 481 each carry the N6-acetyllysine; alternate modification. A Glycyl lysine isopeptide (Lys-Gly) (interchain with G-Cter in SUMO2) cross-link involves residue lysine 486. The segment covering 495–521 (FPERSKKEDRGKRSEGGHRGFVPEKNF) has biased composition (basic and acidic residues). An N6-acetyllysine modification is found at lysine 519. Lysine 527 is covalently cross-linked (Glycyl lysine isopeptide (Lys-Gly) (interchain with G-Cter in SUMO2); alternate). N6-acetyllysine; alternate is present on lysine 527. Position 535 is a phosphoserine (serine 535). Over residues 540 to 550 (KTSESRDKLGA) the composition is skewed to basic and acidic residues. Lysine 551 participates in a covalent cross-link: Glycyl lysine isopeptide (Lys-Gly) (interchain with G-Cter in SUMO2). 552–559 (GDFPTGKS) is a binding site for ATP. Lysine 558 is covalently cross-linked (Glycyl lysine isopeptide (Lys-Gly) (interchain with G-Cter in SUMO2); alternate). Lysine 558 is subject to N6-acetyllysine; alternate. Serine 560, serine 562, and serine 575 each carry phosphoserine. Lysine 602 is covalently cross-linked (Glycyl lysine isopeptide (Lys-Gly) (interchain with G-Cter in SUMO2)). A phosphoserine mark is found at serine 619, serine 622, serine 672, serine 682, and serine 684. Residues 663–680 (EQEAAKNKKSPEIHRRID) are compositionally biased toward basic and acidic residues. The interval 663-955 (EQEAAKNKKS…EKDNIQPTTE (293 aa)) is disordered. Positions 691-761 (LAHDEMKSPR…RSAEKTEKTH (71 aa)) are enriched in basic and acidic residues. Residue lysine 697 forms a Glycyl lysine isopeptide (Lys-Gly) (interchain with G-Cter in SUMO2) linkage. A Phosphoserine modification is found at serine 698. Glycyl lysine isopeptide (Lys-Gly) (interchain with G-Cter in SUMO2) cross-links involve residues lysine 705, lysine 709, lysine 711, lysine 756, and lysine 759. Residues 762-775 (KGSKKQKKHRRARD) are compositionally biased toward basic residues. Positions 779–789 (SSSSSSQSSHS) are enriched in low complexity. Lysine 811 carries the N6-acetyllysine modification. Residue arginine 845 is modified to Asymmetric dimethylarginine. Positions 848–859 (YSGNNNNNSNND) are enriched in low complexity. The residue at position 874 (threonine 874) is a Phosphothreonine. Residues lysine 876 and lysine 879 each participate in a glycyl lysine isopeptide (Lys-Gly) (interchain with G-Cter in SUMO2) cross-link. Over residues 881 to 895 (YLHDDREGEGSDKWV) the composition is skewed to basic and acidic residues. A phosphoserine mark is found at serine 928 and serine 939. Positions 930 to 940 (EEGEIEDDESG) are enriched in acidic residues.

The protein belongs to the BCLAF1/THRAP3 family. Associated with the large multiprotein complex TRAP (Mediator complex-like). Interacts with SFPQ; the interaction is dependent on SFPQ phosphorylation at 'Thr-687' and inhibits binding of SFPQ to an ESS1 exonic splicing silencer element-containing RNA. Interacts with NXF1. Component of the SNARP complex which consists at least of SNIP1, SNW1, THRAP3, BCLAF1 and PNN. Associated with spliced mRNP complexes. Interacts with HELZ2 and PPARG. Interacts with CLOCK and BMAL1. Component of a MACOM-like complex, named WTAP complex, composed of WTAP, ZC3H13, CBLL1, KIAA1429, RBM15, BCLAF1 and THRAP3. Post-translationally, ADP-ribosylation during genotoxic stress promotes accumulation in nuclear speckles. As to expression, ubiquitous.

It is found in the nucleus. The protein resides in the nucleoplasm. The protein localises to the nucleus speckle. In terms of biological role, involved in pre-mRNA splicing. Remains associated with spliced mRNA after splicing which probably involves interactions with the exon junction complex (EJC). Can trigger mRNA decay which seems to be independent of nonsense-mediated decay involving premature stop codons (PTC) recognition. May be involved in nuclear mRNA decay. Involved in regulation of signal-induced alternative splicing. During splicing of PTPRC/CD45 is proposed to sequester phosphorylated SFPQ from PTPRC/CD45 pre-mRNA in resting T-cells. Involved in cyclin-D1/CCND1 mRNA stability probably by acting as component of the SNARP complex which associates with both the 3'end of the CCND1 gene and its mRNA. Involved in response to DNA damage. Is excluced from DNA damage sites in a manner that parallels transcription inhibition; the function may involve the SNARP complex. Initially thought to play a role in transcriptional coactivation through its association with the TRAP complex; however, it is not regarded as a stable Mediator complex subunit. Cooperatively with HELZ2, enhances the transcriptional activation mediated by PPARG, maybe through the stabilization of the PPARG binding to DNA in presence of ligand. May play a role in the terminal stage of adipocyte differentiation. Plays a role in the positive regulation of the circadian clock. Acts as a coactivator of the CLOCK-BMAL1 heterodimer and promotes its transcriptional activator activity and binding to circadian target genes. The chain is Thyroid hormone receptor-associated protein 3 from Homo sapiens (Human).